A 194-amino-acid polypeptide reads, in one-letter code: ATP synthase subunit delta (194 aa).

This sequence belongs to the ATPase delta chain family. F-type ATPases have 2 components, F(1) - the catalytic core - and F(0) - the membrane proton channel. F(1) has five subunits: alpha(3), beta(3), gamma(1), delta(1), epsilon(1). F(0) has three main subunits: a(1), b(2) and c(10-14). The alpha and beta chains form an alternating ring which encloses part of the gamma chain. F(1) is attached to F(0) by a central stalk formed by the gamma and epsilon chains, while a peripheral stalk is formed by the delta and b chains.

Its subcellular location is the cell inner membrane. F(1)F(0) ATP synthase produces ATP from ADP in the presence of a proton or sodium gradient. F-type ATPases consist of two structural domains, F(1) containing the extramembraneous catalytic core and F(0) containing the membrane proton channel, linked together by a central stalk and a peripheral stalk. During catalysis, ATP synthesis in the catalytic domain of F(1) is coupled via a rotary mechanism of the central stalk subunits to proton translocation. Its function is as follows. This protein is part of the stalk that links CF(0) to CF(1). It either transmits conformational changes from CF(0) to CF(1) or is implicated in proton conduction. The chain is ATP synthase subunit delta from Bartonella bacilliformis (strain ATCC 35685 / KC583 / Herrer 020/F12,63).